The chain runs to 274 residues: Glutamate racemase (274 aa).

Residues 9-10 (DS) and 41-42 (YG) each bind substrate. The Proton donor/acceptor role is filled by Cys-73. Substrate is bound at residue 74–75 (NT). The Proton donor/acceptor role is filled by Cys-183. 184 to 185 (TH) contributes to the substrate binding site.

The protein belongs to the aspartate/glutamate racemases family.

The catalysed reaction is L-glutamate = D-glutamate. The protein operates within cell wall biogenesis; peptidoglycan biosynthesis. In terms of biological role, provides the (R)-glutamate required for cell wall biosynthesis. The chain is Glutamate racemase from Shewanella baltica (strain OS185).